The chain runs to 593 residues: Probable tripeptidyl-peptidase SED3 (593 aa).

The first 18 residues, 1 to 18 (MLLRWHSVIPLFLAMTVA), serve as a signal peptide directing secretion. Positions 19-198 (FPNTYRTVVE…NLQAIYLSTN (180 aa)) are cleaved as a propeptide — removed in mature form. Asn-204, Asn-261, and Asn-275 each carry an N-linked (GlcNAc...) asparagine glycan. The 387-residue stretch at 206 to 592 (TITPRCLREL…RILAKIVQHM (387 aa)) folds into the Peptidase S53 domain. Residues Glu-282 and Asp-286 each act as charge relay system in the active site. Asn-295 carries N-linked (GlcNAc...) asparagine glycosylation. Ser-496 acts as the Charge relay system in catalysis. Ca(2+)-binding residues include Asp-538 and Ile-539. Asn-554 and Asn-566 each carry an N-linked (GlcNAc...) asparagine glycan. Residues Gly-570 and Asp-572 each contribute to the Ca(2+) site.

It depends on Ca(2+) as a cofactor.

The protein localises to the secreted. Its subcellular location is the extracellular space. The enzyme catalyses Release of an N-terminal tripeptide from a polypeptide.. Functionally, secreted tripeptidyl-peptidase which degrades proteins at acidic pHs and is involved in virulence. The protein is Probable tripeptidyl-peptidase SED3 (SED3) of Arthroderma benhamiae (strain ATCC MYA-4681 / CBS 112371) (Trichophyton mentagrophytes).